Here is a 328-residue protein sequence, read N- to C-terminus: Nicotianamine synthase 1 (328 aa).

This sequence belongs to the nicotianamine synthase (NAS)-like family. In roots but not in leaves.

The catalysed reaction is 3 S-adenosyl-L-methionine = nicotianamine + 3 S-methyl-5'-thioadenosine + 3 H(+). In terms of biological role, synthesizes nicotianamine, a polyamine that is the first intermediate in the synthesis of the phytosiderophores of the mugineic acid type found in gramineae which serves as a sensor for the physiological iron status within the plant, and/or might be involved in the transport of iron. The chain is Nicotianamine synthase 1 (NAS1) from Hordeum vulgare (Barley).